Here is an 845-residue protein sequence, read N- to C-terminus: Protein P (845 aa).

The interval 1–179 (MPLSYQHFRK…FCGSPYSWEQ (179 aa)) is terminal protein domain (TP). The tract at residues 180–348 (ELHHGRLVIK…YCLSHLVNLL (169 aa)) is spacer. The tract at residues 349-692 (EDWGPCTEHG…YMNLYPVARQ (344 aa)) is polymerase/reverse transcriptase domain (RT). The 244-residue stretch at 359-602 (EHHIRIPRTP…YSLNFMGYVI (244 aa)) folds into the Reverse transcriptase domain. 3 residues coordinate Mg(2+): aspartate 431, aspartate 553, and aspartate 554.

The protein belongs to the hepadnaviridae P protein family.

The catalysed reaction is DNA(n) + a 2'-deoxyribonucleoside 5'-triphosphate = DNA(n+1) + diphosphate. The enzyme catalyses Endonucleolytic cleavage to 5'-phosphomonoester.. With respect to regulation, activated by host HSP70 and HSP40 in vitro to be able to bind the epsilon loop of the pgRNA. Because deletion of the RNase H region renders the protein partly chaperone-independent, the chaperones may be needed indirectly to relieve occlusion of the RNA-binding site by this domain. Inhibited by several reverse-transcriptase inhibitors: Lamivudine, Adefovir and Entecavir. In terms of biological role, multifunctional enzyme that converts the viral RNA genome into dsDNA in viral cytoplasmic capsids. This enzyme displays a DNA polymerase activity that can copy either DNA or RNA templates, and a ribonuclease H (RNase H) activity that cleaves the RNA strand of RNA-DNA heteroduplexes in a partially processive 3'- to 5'-endonucleasic mode. Neo-synthesized pregenomic RNA (pgRNA) are encapsidated together with the P protein, and reverse-transcribed inside the nucleocapsid. Initiation of reverse-transcription occurs first by binding the epsilon loop on the pgRNA genome, and is initiated by protein priming, thereby the 5'-end of (-)DNA is covalently linked to P protein. Partial (+)DNA is synthesized from the (-)DNA template and generates the relaxed circular DNA (RC-DNA) genome. After budding and infection, the RC-DNA migrates in the nucleus, and is converted into a plasmid-like covalently closed circular DNA (cccDNA). The activity of P protein does not seem to be necessary for cccDNA generation, and is presumably released from (+)DNA by host nuclear DNA repair machinery. This is Protein P from Homo sapiens (Human).